The chain runs to 171 residues: ATP synthase subunit b (171 aa).

The chain crosses the membrane as a helical span at residues 2–22; it reads FVVKMVLGFLILLSPLCATGL.

It belongs to the ATPase B chain family. In terms of assembly, F-type ATPases have 2 components, F(1) - the catalytic core - and F(0) - the membrane proton channel. F(1) has five subunits: alpha(3), beta(3), gamma(1), delta(1), epsilon(1). F(0) has three main subunits: a(1), b(2) and c(10-14). The alpha and beta chains form an alternating ring which encloses part of the gamma chain. F(1) is attached to F(0) by a central stalk formed by the gamma and epsilon chains, while a peripheral stalk is formed by the delta and b chains.

The protein resides in the cell inner membrane. Functionally, f(1)F(0) ATP synthase produces ATP from ADP in the presence of a proton or sodium gradient. F-type ATPases consist of two structural domains, F(1) containing the extramembraneous catalytic core and F(0) containing the membrane proton channel, linked together by a central stalk and a peripheral stalk. During catalysis, ATP synthesis in the catalytic domain of F(1) is coupled via a rotary mechanism of the central stalk subunits to proton translocation. Component of the F(0) channel, it forms part of the peripheral stalk, linking F(1) to F(0). In Helicobacter pylori (strain J99 / ATCC 700824) (Campylobacter pylori J99), this protein is ATP synthase subunit b.